A 330-amino-acid chain; its full sequence is o-succinylbenzoate synthase (330 aa).

The active-site Proton donor is Lys-130. Residues Asp-155, Glu-184, and Asp-206 each coordinate Mg(2+). The active-site Proton acceptor is Lys-228.

It belongs to the mandelate racemase/muconate lactonizing enzyme family. MenC type 1 subfamily. As to quaternary structure, monomer. It depends on a divalent metal cation as a cofactor.

It catalyses the reaction (1R,6R)-6-hydroxy-2-succinyl-cyclohexa-2,4-diene-1-carboxylate = 2-succinylbenzoate + H2O. It functions in the pathway quinol/quinone metabolism; 1,4-dihydroxy-2-naphthoate biosynthesis; 1,4-dihydroxy-2-naphthoate from chorismate: step 4/7. It participates in cofactor biosynthesis; phylloquinone biosynthesis. Its function is as follows. Converts 2-succinyl-6-hydroxy-2,4-cyclohexadiene-1-carboxylate (SHCHC) to 2-succinylbenzoate (OSB). Does not show N-succinylamino acid racemase (NSAR) activity with N-succinyl-L-phenylglycine as substrate. The chain is o-succinylbenzoate synthase from Bdellovibrio bacteriovorus (strain ATCC 15356 / DSM 50701 / NCIMB 9529 / HD100).